Consider the following 110-residue polypeptide: MEAIAKHNFARISPQKARLVADQIRGKSVDQALELLTFSNKKAAELVKKVLESAIANAEHNEGADIDDLRVAKIFVDEGPVMKRIMPRAKGRADRILKRSSHITVVVADR.

It belongs to the universal ribosomal protein uL22 family. As to quaternary structure, part of the 50S ribosomal subunit.

In terms of biological role, this protein binds specifically to 23S rRNA; its binding is stimulated by other ribosomal proteins, e.g. L4, L17, and L20. It is important during the early stages of 50S assembly. It makes multiple contacts with different domains of the 23S rRNA in the assembled 50S subunit and ribosome. Functionally, the globular domain of the protein is located near the polypeptide exit tunnel on the outside of the subunit, while an extended beta-hairpin is found that lines the wall of the exit tunnel in the center of the 70S ribosome. In Vibrio cholerae serotype O1 (strain ATCC 39541 / Classical Ogawa 395 / O395), this protein is Large ribosomal subunit protein uL22.